Here is a 165-residue protein sequence, read N- to C-terminus: uncharacterized protein (165 aa).

Residues 51 to 102 are disordered; the sequence is KQAAVEPGARGGERPTGSQAGVTDTPDSAPFQRRSRAPRAREQAAQAGLNQK. Residues 66–76 show a composition bias toward polar residues; sequence TGSQAGVTDTP.

This is an uncharacterized protein from Mus musculus (Mouse).